The chain runs to 245 residues: tRNA (guanine-N(1)-)-methyltransferase (245 aa).

Residues G108 and 127–132 (IGDYVL) each bind S-adenosyl-L-methionine.

It belongs to the RNA methyltransferase TrmD family. In terms of assembly, homodimer.

The protein localises to the cytoplasm. It carries out the reaction guanosine(37) in tRNA + S-adenosyl-L-methionine = N(1)-methylguanosine(37) in tRNA + S-adenosyl-L-homocysteine + H(+). Specifically methylates guanosine-37 in various tRNAs. This Lactobacillus delbrueckii subsp. bulgaricus (strain ATCC 11842 / DSM 20081 / BCRC 10696 / JCM 1002 / NBRC 13953 / NCIMB 11778 / NCTC 12712 / WDCM 00102 / Lb 14) protein is tRNA (guanine-N(1)-)-methyltransferase.